The following is a 179-amino-acid chain: PP2C-like domain-containing protein R307 (179 aa).

Residues 1–176 enclose the PPM-type phosphatase domain; the sequence is MNESKRENIQ…DNVSVIIIFF (176 aa).

It is found in the virion. This is PP2C-like domain-containing protein R307 from Acanthamoeba polyphaga mimivirus (APMV).